The following is a 133-amino-acid chain: MKLGSAIPWALLFSTATLISTGWGLDYHACGGRLTDDYGTIFTYKGPKTECVWTLQVDPKYKLLVSIPTLNLTCGKEYVEILEGAPGSKSLGKFCEGLSILNRGSSGMTVKYKRDSGHPASPYEIIFLRDSQG.

Residues 1-24 (MKLGSAIPWALLFSTATLISTGWG) form the signal peptide. Cys-30 and Cys-51 are joined by a disulfide. A CUB domain is found at 30 to 130 (CGGRLTDDYG…SPYEIIFLRD (101 aa)). N-linked (GlcNAc...) (complex) asparagine glycosylation occurs at Asn-71. Cysteines 74 and 95 form a disulfide.

Monomer or heterodimer with PSP-II (depending on the type of glycosylation of PSP-I). Seminal plasma or sperm.

The protein resides in the secreted. Functionally, not yet identified, major porcine seminal plasma protein. Can bind soybean trypsin inhibitor after deglycosylation. In Sus scrofa (Pig), this protein is Major seminal plasma glycoprotein PSP-I.